Here is an 842-residue protein sequence, read N- to C-terminus: Squamosa promoter-binding-like protein 9 (842 aa).

Residues Met-1–Asp-18 show a composition bias toward gly residues. Disordered regions lie at residues Met-1–Pro-22, Ala-59–Lys-97, and Arg-140–Glu-168. The span at Pro-69 to Ser-85 shows a compositional bias: low complexity. The segment covering Ala-146–Ser-162 has biased composition (gly residues). An SBP-type; atypical zinc finger spans residues Glu-168–Lys-245. 8 residues coordinate Zn(2+): Cys-171, Cys-176, Cys-193, Cys-196, Cys-212, Cys-215, His-219, and Cys-231. Positions Lys-228–Arg-244 match the Bipartite nuclear localization signal motif. Residues Glu-236–Pro-246 show a composition bias toward basic residues. The interval Glu-236 to Ile-256 is disordered.

In terms of tissue distribution, ubiquitous.

It localises to the nucleus. Its function is as follows. Trans-acting factor that binds specifically to the consensus nucleotide sequence 5'-TNCGTACAA-3'. This is Squamosa promoter-binding-like protein 9 (SPL9) from Oryza sativa subsp. japonica (Rice).